The sequence spans 372 residues: PqqA peptide cyclase (372 aa).

The Radical SAM core domain occupies 4 to 220 (APPPLSVLLE…ETARRQLGDR (217 aa)). Positions 18, 22, and 25 each coordinate [4Fe-4S] cluster.

This sequence belongs to the radical SAM superfamily. PqqE family. Interacts with PqqD. The interaction is necessary for activity of PqqE. Requires [4Fe-4S] cluster as cofactor.

The catalysed reaction is [PQQ precursor protein] + S-adenosyl-L-methionine = E-Y cross-linked-[PQQ precursor protein] + 5'-deoxyadenosine + L-methionine + H(+). Its pathway is cofactor biosynthesis; pyrroloquinoline quinone biosynthesis. Its function is as follows. Catalyzes the cross-linking of a glutamate residue and a tyrosine residue in the PqqA protein as part of the biosynthesis of pyrroloquinoline quinone (PQQ). The sequence is that of PqqA peptide cyclase from Xanthomonas axonopodis pv. citri (strain 306).